The chain runs to 87 residues: Small ribosomal subunit protein uS17 (87 aa).

This sequence belongs to the universal ribosomal protein uS17 family. As to quaternary structure, part of the 30S ribosomal subunit.

In terms of biological role, one of the primary rRNA binding proteins, it binds specifically to the 5'-end of 16S ribosomal RNA. The polypeptide is Small ribosomal subunit protein uS17 (Endomicrobium trichonymphae).